The sequence spans 436 residues: ATP-dependent RNA helicase RhlB (436 aa).

Positions 9–37 (QKFADLDLLPQVIEGLEKKGFDYCTPIQA) match the Q motif motif. A Helicase ATP-binding domain is found at 40 to 219 (LPVLLTGQDI…FEHMHNPEHV (180 aa)). 53–60 (AQTGTGKT) is a binding site for ATP. A DEAD box motif is present at residues 165 to 168 (DEAD). The Helicase C-terminal domain maps to 245-390 (ALLQTLIEEE…MSDYDASALL (146 aa)). The interval 398–436 (RLRTRNPQQRRSNNNGPRNGNRKPNQNRRPRQPRHNKEA) is disordered. Low complexity predominate over residues 402–421 (RNPQQRRSNNNGPRNGNRKP). A compositionally biased stretch (basic residues) spans 422–436 (NQNRRPRQPRHNKEA).

The protein belongs to the DEAD box helicase family. RhlB subfamily. In terms of assembly, component of the RNA degradosome, which is a multiprotein complex involved in RNA processing and mRNA degradation.

The protein localises to the cytoplasm. It carries out the reaction ATP + H2O = ADP + phosphate + H(+). Its function is as follows. DEAD-box RNA helicase involved in RNA degradation. Has RNA-dependent ATPase activity and unwinds double-stranded RNA. The chain is ATP-dependent RNA helicase RhlB from Vibrio atlanticus (strain LGP32) (Vibrio splendidus (strain Mel32)).